A 550-amino-acid polypeptide reads, in one-letter code: Dihydroxy-acid dehydratase (550 aa).

D78 lines the Mg(2+) pocket. C119 contacts [2Fe-2S] cluster. Mg(2+) contacts are provided by D120 and K121. At K121 the chain carries N6-carboxylysine. C191 contacts [2Fe-2S] cluster. Mg(2+) is bound at residue E440. Residue S466 is the Proton acceptor of the active site.

It belongs to the IlvD/Edd family. As to quaternary structure, homodimer. [2Fe-2S] cluster serves as cofactor. Requires Mg(2+) as cofactor.

It catalyses the reaction (2R)-2,3-dihydroxy-3-methylbutanoate = 3-methyl-2-oxobutanoate + H2O. The enzyme catalyses (2R,3R)-2,3-dihydroxy-3-methylpentanoate = (S)-3-methyl-2-oxopentanoate + H2O. The protein operates within amino-acid biosynthesis; L-isoleucine biosynthesis; L-isoleucine from 2-oxobutanoate: step 3/4. It functions in the pathway amino-acid biosynthesis; L-valine biosynthesis; L-valine from pyruvate: step 3/4. Its function is as follows. Functions in the biosynthesis of branched-chain amino acids. Catalyzes the dehydration of (2R,3R)-2,3-dihydroxy-3-methylpentanoate (2,3-dihydroxy-3-methylvalerate) into 2-oxo-3-methylpentanoate (2-oxo-3-methylvalerate) and of (2R)-2,3-dihydroxy-3-methylbutanoate (2,3-dihydroxyisovalerate) into 2-oxo-3-methylbutanoate (2-oxoisovalerate), the penultimate precursor to L-isoleucine and L-valine, respectively. The polypeptide is Dihydroxy-acid dehydratase (Methanococcus maripaludis (strain DSM 14266 / JCM 13030 / NBRC 101832 / S2 / LL)).